The sequence spans 788 residues: Endonuclease MutS2 (788 aa).

332 to 339 serves as a coordination point for ATP; sequence GPNTGGKT. Residues 713-788 form the Smr domain; that stretch reads IDLRGLDSEE…GTGVTVVELK (76 aa).

It belongs to the DNA mismatch repair MutS family. MutS2 subfamily. Homodimer. Binds to stalled ribosomes, contacting rRNA.

In terms of biological role, endonuclease that is involved in the suppression of homologous recombination and thus may have a key role in the control of bacterial genetic diversity. Acts as a ribosome collision sensor, splitting the ribosome into its 2 subunits. Detects stalled/collided 70S ribosomes which it binds and splits by an ATP-hydrolysis driven conformational change. Acts upstream of the ribosome quality control system (RQC), a ribosome-associated complex that mediates the extraction of incompletely synthesized nascent chains from stalled ribosomes and their subsequent degradation. Probably generates substrates for RQC. This Clostridium acetobutylicum (strain ATCC 824 / DSM 792 / JCM 1419 / IAM 19013 / LMG 5710 / NBRC 13948 / NRRL B-527 / VKM B-1787 / 2291 / W) protein is Endonuclease MutS2.